A 678-amino-acid polypeptide reads, in one-letter code: Pentatricopeptide repeat-containing protein At5g39980, chloroplastic (678 aa).

A chloroplast-targeting transit peptide spans 1–64; sequence MYIEIASSSS…NKKVWRKQPE (64 aa). PPR repeat units follow at residues 154–188, 189–223, 224–258, 259–293, 294–328, 329–363, 364–398, 399–433, 434–468, 469–503, 535–569, 570–604, 605–638, and 639–674; these read SVFA…ALAP, DRYT…RVSG, DLVL…GITP, DLVA…GVLP, NTVS…NCAL, DLTT…DIEP, NVVS…DIEQ, NVVT…GIEP, NAIT…GVEI, DQVL…DNIP, DISV…GYFP, DSNV…GCVF, PDEV…DPNV, and NSKE…GILK.

It belongs to the PPR family. P subfamily.

It localises to the plastid. It is found in the chloroplast. The polypeptide is Pentatricopeptide repeat-containing protein At5g39980, chloroplastic (Arabidopsis thaliana (Mouse-ear cress)).